Consider the following 404-residue polypeptide: uncharacterized protein (404 aa).

Transmembrane regions (helical) follow at residues Leu-37–Phe-57, Ile-92–Gly-112, Leu-122–Pro-142, Met-188–Ile-208, Ile-230–Thr-250, and Ala-272–Phe-292.

Its subcellular location is the cell membrane. This is an uncharacterized protein from Mycoplasma pneumoniae (strain ATCC 29342 / M129 / Subtype 1) (Mycoplasmoides pneumoniae).